A 564-amino-acid chain; its full sequence is Cytochrome c oxidase subunit 1 (564 aa).

Residues 1-23 (MTAVAPRLENYAEPTRPAPTGGA) are disordered. A run of 7 helical transmembrane segments spans residues 43–63 (MMYIVMSFVWFFVGGLMALLI), 83–103 (LFTLHGTIMLLAFGTPVVWGF), 122–142 (LNAFGFWITQIGVVAMLAGFL), 171–191 (FWIIGVGATGVGTIASAVNMI), 214–234 (IFVASVIVLLIFPLLTAAALG), 259–279 (LFWFFGHPEVYVLALPFFGIV), and 292–312 (FGYIGLVFATLSIGMLSMAVW). Residue H87 participates in Fe(II)-heme a binding. Cu cation contacts are provided by H265 and Y269. A cross-link (1'-histidyl-3'-tyrosine (His-Tyr)) is located at residues 265-269 (HPEVY). The Cu cation site is built by H314 and H315. 2 helical membrane-spanning segments follow: residues 316 to 336 (MFVTGAILLPFFSFMTFLISV) and 360 to 380 (MTWTMGFLVTFLFGGLTGIML). H398 serves as a coordination point for heme a3. The next 3 helical transmembrane spans lie at 399 to 419 (FHYTLFGTVVFASYAGVYFWF), 434 to 454 (IHFWITFVGFHGTFLVQHWVG), and 477 to 497 (ISTVFSFLLGVSVIPFIWNVF). H400 serves as a coordination point for Fe(II)-heme a.

This sequence belongs to the heme-copper respiratory oxidase family. Associates with subunits II, III and IV to form cytochrome c oxidase. Cu(2+) is required as a cofactor. Heme serves as cofactor.

The protein localises to the cell membrane. The catalysed reaction is 4 Fe(II)-[cytochrome c] + O2 + 8 H(+)(in) = 4 Fe(III)-[cytochrome c] + 2 H2O + 4 H(+)(out). It participates in energy metabolism; oxidative phosphorylation. Its function is as follows. Cytochrome c oxidase is the component of the respiratory chain that catalyzes the reduction of oxygen to water. Subunits 1-3 form the functional core of the enzyme complex. CO I is the catalytic subunit of the enzyme. Electrons originating in cytochrome c are transferred via the copper A center of subunit 2 and heme A of subunit 1 to the bimetallic center formed by heme A3 and copper B. The polypeptide is Cytochrome c oxidase subunit 1 (ctaD) (Corynebacterium diphtheriae (strain ATCC 700971 / NCTC 13129 / Biotype gravis)).